The following is a 232-amino-acid chain: Ribose-5-phosphate isomerase A (232 aa).

Substrate is bound by residues 28–31 (TGST), 83–86 (DGAD), and 96–99 (KGGG). Glu105 acts as the Proton acceptor in catalysis. Lys123 contacts substrate.

This sequence belongs to the ribose 5-phosphate isomerase family. In terms of assembly, homodimer.

It carries out the reaction aldehydo-D-ribose 5-phosphate = D-ribulose 5-phosphate. The protein operates within carbohydrate degradation; pentose phosphate pathway; D-ribose 5-phosphate from D-ribulose 5-phosphate (non-oxidative stage): step 1/1. Its function is as follows. Catalyzes the reversible conversion of ribose-5-phosphate to ribulose 5-phosphate. This chain is Ribose-5-phosphate isomerase A, found in Allorhizobium ampelinum (strain ATCC BAA-846 / DSM 112012 / S4) (Agrobacterium vitis (strain S4)).